A 519-amino-acid polypeptide reads, in one-letter code: DDB1- and CUL4-associated factor 17 (519 aa).

2 consecutive transmembrane segments (helical) span residues 186–206 (VLLYLAVFRVLPFSLVGILEI) and 222–242 (GILIVMYSSGLVRLYSFQAII).

In terms of assembly, interacts with DDB1, CUL4A and CUL4B. Ubiquitously expressed in the embryo, with higher expression in brain, liver and skin tissues.

Its subcellular location is the membrane. The protein resides in the nucleus. The protein localises to the nucleolus. The protein operates within protein modification; protein ubiquitination. In terms of biological role, may function as a substrate receptor for CUL4-DDB1 E3 ubiquitin-protein ligase complex. This Mus musculus (Mouse) protein is DDB1- and CUL4-associated factor 17 (Dcaf17).